The sequence spans 364 residues: GTPase Obg (364 aa).

The Obg domain occupies 1 to 161 (MRFVDEVTIS…KYLRLELKIL (161 aa)). An OBG-type G domain is found at 162 to 334 (ADAGIIGLPN…LVDAIWKLQS (173 aa)). Residues 168–175 (GLPNAGKS), 193–197 (FTTLN), 217–220 (DIPG), 287–290 (NKID), and 315–317 (SAE) contribute to the GTP site. Mg(2+) is bound by residues S175 and T195.

This sequence belongs to the TRAFAC class OBG-HflX-like GTPase superfamily. OBG GTPase family. As to quaternary structure, monomer. Mg(2+) serves as cofactor.

It localises to the cytoplasm. In terms of biological role, an essential GTPase which binds GTP, GDP and possibly (p)ppGpp with moderate affinity, with high nucleotide exchange rates and a fairly low GTP hydrolysis rate. Plays a role in control of the cell cycle, stress response, ribosome biogenesis and in those bacteria that undergo differentiation, in morphogenesis control. The polypeptide is GTPase Obg (Lawsonia intracellularis (strain PHE/MN1-00)).